Reading from the N-terminus, the 338-residue chain is Holliday junction branch migration complex subunit RuvB (338 aa).

The large ATPase domain (RuvB-L) stretch occupies residues 1-181 (MTTRTISPEK…FGVISRLEFY (181 aa)). ATP is bound by residues Leu-20, Arg-21, Gly-62, Lys-65, Thr-66, Thr-67, 128–130 (EDF), Arg-171, Tyr-181, and Arg-218. Thr-66 contacts Mg(2+). The tract at residues 182–252 (TDAELSTIVT…VVDESLKLLE (71 aa)) is small ATPAse domain (RuvB-S). The tract at residues 255 to 338 (EKGFDQMDRT…APAPGQGALF (84 aa)) is head domain (RuvB-H). Residues Arg-291, Arg-310, and Arg-315 each coordinate DNA.

Belongs to the RuvB family. In terms of assembly, homohexamer. Forms an RuvA(8)-RuvB(12)-Holliday junction (HJ) complex. HJ DNA is sandwiched between 2 RuvA tetramers; dsDNA enters through RuvA and exits via RuvB. An RuvB hexamer assembles on each DNA strand where it exits the tetramer. Each RuvB hexamer is contacted by two RuvA subunits (via domain III) on 2 adjacent RuvB subunits; this complex drives branch migration. In the full resolvosome a probable DNA-RuvA(4)-RuvB(12)-RuvC(2) complex forms which resolves the HJ.

The protein localises to the cytoplasm. It catalyses the reaction ATP + H2O = ADP + phosphate + H(+). In terms of biological role, the RuvA-RuvB-RuvC complex processes Holliday junction (HJ) DNA during genetic recombination and DNA repair, while the RuvA-RuvB complex plays an important role in the rescue of blocked DNA replication forks via replication fork reversal (RFR). RuvA specifically binds to HJ cruciform DNA, conferring on it an open structure. The RuvB hexamer acts as an ATP-dependent pump, pulling dsDNA into and through the RuvAB complex. RuvB forms 2 homohexamers on either side of HJ DNA bound by 1 or 2 RuvA tetramers; 4 subunits per hexamer contact DNA at a time. Coordinated motions by a converter formed by DNA-disengaged RuvB subunits stimulates ATP hydrolysis and nucleotide exchange. Immobilization of the converter enables RuvB to convert the ATP-contained energy into a lever motion, pulling 2 nucleotides of DNA out of the RuvA tetramer per ATP hydrolyzed, thus driving DNA branch migration. The RuvB motors rotate together with the DNA substrate, which together with the progressing nucleotide cycle form the mechanistic basis for DNA recombination by continuous HJ branch migration. Branch migration allows RuvC to scan DNA until it finds its consensus sequence, where it cleaves and resolves cruciform DNA. In Geobacter sulfurreducens (strain ATCC 51573 / DSM 12127 / PCA), this protein is Holliday junction branch migration complex subunit RuvB.